The chain runs to 170 residues: Small ribosomal subunit protein uS15 (170 aa).

The span at 1–10 (MARMHSRKKG) shows a compositional bias: basic residues. The disordered stretch occupies residues 1–20 (MARMHSRKKGSSGSRPPVVD).

It belongs to the universal ribosomal protein uS15 family. Part of the 30S ribosomal subunit.

This chain is Small ribosomal subunit protein uS15, found in Methanothrix thermoacetophila (strain DSM 6194 / JCM 14653 / NBRC 101360 / PT) (Methanosaeta thermophila).